The following is a 426-amino-acid chain: MSRSEELFLQAQKHIPGGVNSPVRAFKAVGGTPVFFEKALGAYIWDADGKRYIDYVQSWGPMVLGHAHPEVINTVIDAAKHGLSFGAPTERETTLAEKLCSLMPGMDMVRFVSSGTEATMSAIRLARAFTKRDKIIKFEGCYHGHSDSLLIKAGSGALTLGVPSSPGVPAVLADHTITLDYNNAEQVRECFAELGEQIACIIVEPVVGNMNCVPPVPGFLECLREVCDRYGSVLILDEVMTGFRVSPTGAQGYYGIKADITTLGKVIGGGMPVGAFGGRRDIMQMIAPSGPVYQAGTLSGNPVAMAAGLKTLELLQAPEIYPHLYARTNQLVEGLQTLADKAGIPFTTNHVGSMFGFFFTEEKKVTNFKQVMACDIPRFNKFFHGMLERGIYLAPASYEAGFMSTAHTQGDIDQTLGAAEAVFSSL.

The residue at position 265 (Lys-265) is an N6-(pyridoxal phosphate)lysine.

Belongs to the class-III pyridoxal-phosphate-dependent aminotransferase family. HemL subfamily. In terms of assembly, homodimer. Pyridoxal 5'-phosphate serves as cofactor.

The protein resides in the cytoplasm. The catalysed reaction is (S)-4-amino-5-oxopentanoate = 5-aminolevulinate. The protein operates within porphyrin-containing compound metabolism; protoporphyrin-IX biosynthesis; 5-aminolevulinate from L-glutamyl-tRNA(Glu): step 2/2. The sequence is that of Glutamate-1-semialdehyde 2,1-aminomutase from Cellvibrio japonicus (strain Ueda107) (Pseudomonas fluorescens subsp. cellulosa).